Reading from the N-terminus, the 273-residue chain is Glutamate 5-kinase (273 aa).

K15 contacts ATP. Substrate-binding residues include S55, D142, and N158. ATP is bound by residues 178 to 179 (SD) and 220 to 226 (TGGMLSK).

Belongs to the glutamate 5-kinase family.

It is found in the cytoplasm. It catalyses the reaction L-glutamate + ATP = L-glutamyl 5-phosphate + ADP. The protein operates within amino-acid biosynthesis; L-proline biosynthesis; L-glutamate 5-semialdehyde from L-glutamate: step 1/2. Functionally, catalyzes the transfer of a phosphate group to glutamate to form L-glutamate 5-phosphate. This is Glutamate 5-kinase from Streptococcus pyogenes serotype M3 (strain ATCC BAA-595 / MGAS315).